The following is a 140-amino-acid chain: Nucleoside diphosphate kinase (140 aa).

ATP-binding residues include Lys-11, Phe-59, Arg-87, Thr-93, Arg-104, and Asn-114. His-117 functions as the Pros-phosphohistidine intermediate in the catalytic mechanism.

Belongs to the NDK family. As to quaternary structure, homotetramer. The cofactor is Mg(2+).

It is found in the cytoplasm. The enzyme catalyses a 2'-deoxyribonucleoside 5'-diphosphate + ATP = a 2'-deoxyribonucleoside 5'-triphosphate + ADP. It catalyses the reaction a ribonucleoside 5'-diphosphate + ATP = a ribonucleoside 5'-triphosphate + ADP. Functionally, major role in the synthesis of nucleoside triphosphates other than ATP. The ATP gamma phosphate is transferred to the NDP beta phosphate via a ping-pong mechanism, using a phosphorylated active-site intermediate. The polypeptide is Nucleoside diphosphate kinase (Rickettsia conorii (strain ATCC VR-613 / Malish 7)).